We begin with the raw amino-acid sequence, 162 residues long: HTH-type transcriptional regulator IscR (162 aa).

Positions 2–131 constitute an HTH rrf2-type domain; that stretch reads RLTSKGRYAV…NNITLGELVN (130 aa). Positions 28 to 51 form a DNA-binding region, H-T-H motif; it reads LADISERQGISLSYLEQLFSRLRK. [2Fe-2S] cluster is bound by residues Cys-92, Cys-98, and Cys-104. A disordered region spans residues 140–162; it reads GRQHTHDAPRTRTQDAIDVKLRA. Residues 143–162 are compositionally biased toward basic and acidic residues; sequence HTHDAPRTRTQDAIDVKLRA.

It depends on [2Fe-2S] cluster as a cofactor.

Regulates the transcription of several operons and genes involved in the biogenesis of Fe-S clusters and Fe-S-containing proteins. This Shigella flexneri protein is HTH-type transcriptional regulator IscR.